The chain runs to 200 residues: uncharacterized protein (200 aa).

The helical transmembrane segment at 7–29 (FFFLFSFISHAMMLTGLIGSSSF) threads the bilayer.

It is found in the membrane. This is an uncharacterized protein from Saccharomyces cerevisiae (strain ATCC 204508 / S288c) (Baker's yeast).